Reading from the N-terminus, the 339-residue chain is Casein kinase II subunit alpha' (339 aa).

One can recognise a Protein kinase domain in the interval 50-334 (YEIINKIGRG…AKEAMDHKFF (285 aa)). ATP contacts are provided by residues 56-64 (IGRGKYSEV) and Lys-79. The active-site Proton acceptor is the Asp-167.

It belongs to the protein kinase superfamily. Ser/Thr protein kinase family. CK2 subfamily. As to quaternary structure, tetramer composed of an alpha chain, an alpha', one beta chain and one beta' chain. Interacts with FACT subunits POB3 and SPT16. Interacts with NAP1. Interacts with YTA7.

The enzyme catalyses L-seryl-[protein] + ATP = O-phospho-L-seryl-[protein] + ADP + H(+). It carries out the reaction L-threonyl-[protein] + ATP = O-phospho-L-threonyl-[protein] + ADP + H(+). Its function is as follows. Catalytic subunit of a constitutively active serine/threonine-protein kinase complex that phosphorylates a large number of substrates containing acidic residues C-terminal to the phosphorylated serine or threonine. Phosphorylates YTA7 during S-phase to promote transcription of histones. This chain is Casein kinase II subunit alpha', found in Saccharomyces cerevisiae (strain ATCC 204508 / S288c) (Baker's yeast).